We begin with the raw amino-acid sequence, 360 residues long: Membrane-bound lytic murein transglycosylase C (360 aa).

The N-terminal stretch at 1 to 16 (MKKYLALALIAPLLVS) is a signal peptide. The N-palmitoyl cysteine moiety is linked to residue Cys17. Cys17 is lipidated: S-diacylglycerol cysteine.

This sequence belongs to the transglycosylase Slt family.

It is found in the cell outer membrane. The enzyme catalyses Exolytic cleavage of the (1-&gt;4)-beta-glycosidic linkage between N-acetylmuramic acid (MurNAc) and N-acetylglucosamine (GlcNAc) residues in peptidoglycan, from either the reducing or the non-reducing ends of the peptidoglycan chains, with concomitant formation of a 1,6-anhydrobond in the MurNAc residue.. Murein-degrading enzyme. May play a role in recycling of muropeptides during cell elongation and/or cell division. This Klebsiella pneumoniae (strain 342) protein is Membrane-bound lytic murein transglycosylase C.